A 575-amino-acid polypeptide reads, in one-letter code: Kelch repeat and BTB domain-containing protein 8 (575 aa).

The BTB domain occupies 23-91 (TDIVVEVDHG…AYTSRVILTE (69 aa)). In terms of domain architecture, BACK spans 126–228 (SIGVFIFADH…MEDAFIEKIP (103 aa)). Kelch repeat units lie at residues 310–364 (DIYI…YCCG), 365–415 (KMYA…EHKE), 417–455 (IYVL…VYKD), 457–506 (IYYI…LFQN), and 516–562 (QVTV…FECA).

This sequence belongs to the KBTBD8 family. As to quaternary structure, component of the BCR(KBTBD8) E3 ubiquitin ligase complex, at least composed of CUL3, KBTBD8 and RBX1.

It is found in the cytoplasm. The protein resides in the cytoskeleton. The protein localises to the spindle. Its subcellular location is the golgi apparatus. Substrate-specific adapter of a BCR (BTB-CUL3-RBX1) E3 ubiquitin ligase complex that acts as a regulator of neural crest specification. The BCR(KBTBD8) complex acts by mediating monoubiquitination of NOLC1 and TCOF1: monoubiquitination promotes the formation of a NOLC1-TCOF1 complex that acts as a platform to connect RNA polymerase I with enzymes responsible for ribosomal processing and modification, leading to remodel the translational program of differentiating cells in favor of neural crest specification. The polypeptide is Kelch repeat and BTB domain-containing protein 8 (Rattus norvegicus (Rat)).